Reading from the N-terminus, the 236-residue chain is Ribonuclease HII (236 aa).

Residues 27–219 (RILCGVDEAG…VRRALDGAPP (193 aa)) enclose the RNase H type-2 domain. Residues Asp33, Glu34, and Asp128 each contribute to the a divalent metal cation site. The interval 212-236 (RALDGAPPPAGDAVPQTDAKTAWAD) is disordered.

This sequence belongs to the RNase HII family. Mn(2+) is required as a cofactor. The cofactor is Mg(2+).

Its subcellular location is the cytoplasm. It carries out the reaction Endonucleolytic cleavage to 5'-phosphomonoester.. Endonuclease that specifically degrades the RNA of RNA-DNA hybrids. The sequence is that of Ribonuclease HII from Ralstonia nicotianae (strain ATCC BAA-1114 / GMI1000) (Ralstonia solanacearum).